Reading from the N-terminus, the 392-residue chain is Keratin, type I cuticular Ha4 (392 aa).

A head region spans residues 1 to 56; sequence MSCESCLPALSCRTSCSSRPCVPPSCHGCTLPGACNIPANVGNCNWFCEGSFNGNE. The IF rod domain occupies 56 to 367; sequence EKETMQFLND…SLLESEDCNL (312 aa). The tract at residues 57–91 is coil 1A; the sequence is KETMQFLNDRLASYMEKVRQLERENAELECRIQER. The segment at 92-102 is linker 1; that stretch reads NQQQDPLVCPA. A coil 1B region spans residues 103–203; that stretch reads YQAYFRTIEE…HEEEVNTLRC (101 aa). The linker 12 stretch occupies residues 204-219; that stretch reads QLGDRLNVEVDAAPTV. A coil 2 region spans residues 220–363; sequence DLNRVLNETR…NTYRSLLESE (144 aa). The segment at 364-392 is tail; it reads DCNLPCNPCATTNASGSCCGPCGSSKRCC.

It belongs to the intermediate filament family. As to expression, expressed in the hair root in the hair shaft cuticle and cortex.

The sequence is that of Keratin, type I cuticular Ha4 from Mus musculus (Mouse).